A 198-amino-acid chain; its full sequence is Peptidyl-tRNA hydrolase (198 aa).

TRNA is bound at residue Tyr18. The active-site Proton acceptor is His23. TRNA contacts are provided by Phe69, Asn71, and Asn117.

Belongs to the PTH family. In terms of assembly, monomer.

The protein localises to the cytoplasm. It carries out the reaction an N-acyl-L-alpha-aminoacyl-tRNA + H2O = an N-acyl-L-amino acid + a tRNA + H(+). In terms of biological role, hydrolyzes ribosome-free peptidyl-tRNAs (with 1 or more amino acids incorporated), which drop off the ribosome during protein synthesis, or as a result of ribosome stalling. Functionally, catalyzes the release of premature peptidyl moieties from peptidyl-tRNA molecules trapped in stalled 50S ribosomal subunits, and thus maintains levels of free tRNAs and 50S ribosomes. This is Peptidyl-tRNA hydrolase from Idiomarina loihiensis (strain ATCC BAA-735 / DSM 15497 / L2-TR).